Consider the following 34-residue polypeptide: Cycloamanide E proprotein (34 aa).

Residues 1–10 (MSDINAARLP) constitute a propeptide that is removed on maturation. A cross-link (cyclopeptide (Ser-Pro)) is located at residues 11 to 17 (SFFFPVP). Positions 18-34 (CISDDIEMVLTRGESLC) are excised as a propeptide.

Belongs to the MSDIN fungal toxin family. Post-translationally, processed by the macrocyclase-peptidase enzyme POPB to yield a cyclic decapeptide. POPB first removes 10 residues from the N-terminus. Conformational trapping of the remaining peptide forces the enzyme to release this intermediate rather than proceed to macrocyclization. The enzyme rebinds the remaining peptide in a different conformation and catalyzes macrocyclization of the N-terminal 7 residues.

Cyclic heptapeptide that belongs to the MSDIN-like toxin family responsible for a large number of food poisoning cases and deaths. Cycloaminide E is structurally related to other cycloamanides that are non-toxic to mammals but show immunosuppressive activity. The protein is Cycloamanide E proprotein of Amanita phalloides (Death cap).